The following is a 346-amino-acid chain: Protein RecA (346 aa).

66–73 (GPESSGKT) contacts ATP.

It belongs to the RecA family.

The protein resides in the cytoplasm. In terms of biological role, can catalyze the hydrolysis of ATP in the presence of single-stranded DNA, the ATP-dependent uptake of single-stranded DNA by duplex DNA, and the ATP-dependent hybridization of homologous single-stranded DNAs. It interacts with LexA causing its activation and leading to its autocatalytic cleavage. This is Protein RecA from Aromatoleum aromaticum (strain DSM 19018 / LMG 30748 / EbN1) (Azoarcus sp. (strain EbN1)).